Here is a 294-residue protein sequence, read N- to C-terminus: Putative lipid kinase SP_1045 (294 aa).

In terms of domain architecture, DAGKc spans Met1–Tyr131. ATP-binding positions include Asn9–Gly13, Thr40, Gly66–Glu72, and Thr93. Mg(2+)-binding residues include Asp212 and Tyr214. The active-site Proton acceptor is Asp269.

It belongs to the diacylglycerol/lipid kinase family. The cofactor is Mg(2+).

May catalyze the ATP-dependent phosphorylation of lipids other than diacylglycerol (DAG). In fact, is not able to exhibit diacylglycerol kinase activity in vitro. This is Putative lipid kinase SP_1045 from Streptococcus pneumoniae serotype 4 (strain ATCC BAA-334 / TIGR4).